The primary structure comprises 120 residues: Small ribosomal subunit protein uS17 (120 aa).

A compositionally biased stretch (low complexity) spans 1-22 (MMAEAKTGAKATKSAAAGAADG). Residues 1-46 (MMAEAKTGAKATKSAAAGAADGASKEKGPKHTPSPPKPSGRRKTRI) form a disordered region.

The protein belongs to the universal ribosomal protein uS17 family. In terms of assembly, part of the 30S ribosomal subunit.

Its function is as follows. One of the primary rRNA binding proteins, it binds specifically to the 5'-end of 16S ribosomal RNA. The sequence is that of Small ribosomal subunit protein uS17 from Mycobacterium ulcerans (strain Agy99).